A 149-amino-acid chain; its full sequence is Flavodoxin YqcA (149 aa).

The Flavodoxin-like domain occupies isoleucine 4–glycine 145. Residues threonine 10 to serine 15 and asparagine 99 to cysteine 101 contribute to the FMN site.

Belongs to the flavodoxin family. MioC subfamily. Monomer. Requires FMN as cofactor.

Probable electron transporter. The protein is Flavodoxin YqcA (yqcA) of Escherichia coli (strain K12).